Reading from the N-terminus, the 554-residue chain is Dihydroxy-acid dehydratase (554 aa).

Mg(2+) is bound at residue aspartate 78. Cysteine 119 lines the [2Fe-2S] cluster pocket. Mg(2+)-binding residues include aspartate 120 and lysine 121. Lysine 121 bears the N6-carboxylysine mark. Cysteine 192 serves as a coordination point for [2Fe-2S] cluster. Glutamate 443 serves as a coordination point for Mg(2+). Serine 469 serves as the catalytic Proton acceptor.

It belongs to the IlvD/Edd family. Homodimer. [2Fe-2S] cluster serves as cofactor. Requires Mg(2+) as cofactor.

It carries out the reaction (2R)-2,3-dihydroxy-3-methylbutanoate = 3-methyl-2-oxobutanoate + H2O. It catalyses the reaction (2R,3R)-2,3-dihydroxy-3-methylpentanoate = (S)-3-methyl-2-oxopentanoate + H2O. The protein operates within amino-acid biosynthesis; L-isoleucine biosynthesis; L-isoleucine from 2-oxobutanoate: step 3/4. Its pathway is amino-acid biosynthesis; L-valine biosynthesis; L-valine from pyruvate: step 3/4. Its function is as follows. Functions in the biosynthesis of branched-chain amino acids. Catalyzes the dehydration of (2R,3R)-2,3-dihydroxy-3-methylpentanoate (2,3-dihydroxy-3-methylvalerate) into 2-oxo-3-methylpentanoate (2-oxo-3-methylvalerate) and of (2R)-2,3-dihydroxy-3-methylbutanoate (2,3-dihydroxyisovalerate) into 2-oxo-3-methylbutanoate (2-oxoisovalerate), the penultimate precursor to L-isoleucine and L-valine, respectively. The polypeptide is Dihydroxy-acid dehydratase (Shouchella clausii (strain KSM-K16) (Alkalihalobacillus clausii)).